The following is a 363-amino-acid chain: Chorismate synthase (363 aa).

R48 contacts NADP(+). FMN contacts are provided by residues R125–S127, N238–A239, G278, K293–S297, and R319.

Belongs to the chorismate synthase family. In terms of assembly, homotetramer. Requires FMNH2 as cofactor.

The catalysed reaction is 5-O-(1-carboxyvinyl)-3-phosphoshikimate = chorismate + phosphate. The protein operates within metabolic intermediate biosynthesis; chorismate biosynthesis; chorismate from D-erythrose 4-phosphate and phosphoenolpyruvate: step 7/7. Its function is as follows. Catalyzes the anti-1,4-elimination of the C-3 phosphate and the C-6 proR hydrogen from 5-enolpyruvylshikimate-3-phosphate (EPSP) to yield chorismate, which is the branch point compound that serves as the starting substrate for the three terminal pathways of aromatic amino acid biosynthesis. This reaction introduces a second double bond into the aromatic ring system. In Acinetobacter baumannii (strain SDF), this protein is Chorismate synthase.